The sequence spans 423 residues: Testican-2 (423 aa).

A signal peptide spans Met-1 to Ala-22. Position 72 is a phosphoserine (Ser-72). Disulfide bonds link Cys-90-Cys-101, Cys-95-Cys-111, Cys-136-Cys-166, Cys-139-Cys-159, and Cys-148-Cys-180. A Kazal-like domain is found at Gly-130–Cys-182. N-linked (GlcNAc...) asparagine glycosylation is present at Asn-225. The 67-residue stretch at Lys-309 to Cys-375 folds into the Thyroglobulin type-1 domain. 3 disulfides stabilise this stretch: Cys-312/Cys-336, Cys-347/Cys-354, and Cys-356/Cys-375. 2 O-linked (Xyl...) (glycosaminoglycan) serine glycosylation sites follow: Ser-382 and Ser-387. The interval Ser-387–Trp-423 is disordered. Acidic residues predominate over residues Trp-391 to Trp-423.

Post-translationally, O-glycosylated; contains chondroitin sulfate and heparan sulfate. As to expression, brain specific.

Its subcellular location is the secreted. The protein localises to the extracellular space. It is found in the extracellular matrix. Its function is as follows. May participate in diverse steps of neurogenesis. Binds calcium. The sequence is that of Testican-2 (Spock2) from Mus musculus (Mouse).